The sequence spans 257 residues: Phosphatidylglycerol--prolipoprotein diacylglyceryl transferase (257 aa).

The next 4 helical transmembrane spans lie at 8 to 28 (IFGL…ILAY), 48 to 68 (VFIV…VIFN), 84 to 104 (EGGL…YLMS), and 109 to 129 (LNFL…QAIG). Position 130 (Arg130) interacts with a 1,2-diacyl-sn-glycero-3-phospho-(1'-sn-glycerol). The next 3 membrane-spanning stretches (helical) occupy residues 169-189 (PTFL…LLIT), 196-216 (GSIF…IEGL), and 225-245 (SLRM…ILII).

This sequence belongs to the Lgt family.

Its subcellular location is the cell membrane. It carries out the reaction L-cysteinyl-[prolipoprotein] + a 1,2-diacyl-sn-glycero-3-phospho-(1'-sn-glycerol) = an S-1,2-diacyl-sn-glyceryl-L-cysteinyl-[prolipoprotein] + sn-glycerol 1-phosphate + H(+). It participates in protein modification; lipoprotein biosynthesis (diacylglyceryl transfer). Its function is as follows. Catalyzes the transfer of the diacylglyceryl group from phosphatidylglycerol to the sulfhydryl group of the N-terminal cysteine of a prolipoprotein, the first step in the formation of mature lipoproteins. This is Phosphatidylglycerol--prolipoprotein diacylglyceryl transferase from Clostridium novyi (strain NT).